The primary structure comprises 257 residues: Ribonuclease HII (257 aa).

The RNase H type-2 domain maps to 72 to 257 (TYIAGIDEVG…FAPIKDMIQK (186 aa)). The a divalent metal cation site is built by Asp78, Glu79, and Asp170.

The protein belongs to the RNase HII family. Requires Mn(2+) as cofactor. The cofactor is Mg(2+).

The protein localises to the cytoplasm. It carries out the reaction Endonucleolytic cleavage to 5'-phosphomonoester.. Its function is as follows. Endonuclease that specifically degrades the RNA of RNA-DNA hybrids. The sequence is that of Ribonuclease HII from Bacillus cereus (strain G9842).